The primary structure comprises 396 residues: Protein PIN-LIKES 5 (396 aa).

The Lumenal segment spans residues 1–5; that stretch reads MGFWS. Residues 6–26 traverse the membrane as a helical segment; that stretch reads LLEVASMPVIQVLFMSLVGAF. Residues 27–45 are Cytoplasmic-facing; that stretch reads MASDRCKLFPVEARNSMNK. Residues 46 to 66 traverse the membrane as a helical segment; it reads VVFVLFAPALMFANLAQTVTL. The Lumenal portion of the chain corresponds to 67 to 73; that stretch reads EDIISWW. Residues 74 to 94 traverse the membrane as a helical segment; sequence FMPVNMGLTFLIGGLLGWLVV. The Cytoplasmic segment spans residues 95–106; it reads KILKPPPYLEGL. Residues 107–127 form a helical membrane-spanning segment; that stretch reads IVATCSAGNMGNLPIILVPAI. Topologically, residues 128–144 are lumenal; the sequence is CDEDKSPFGNRSVCRTV. A helical transmembrane segment spans residues 145–165; sequence GLSYASFSMALGGFYIWTYTF. The Cytoplasmic portion of the chain corresponds to 166–229; it reads RLIKGSAMKV…WRKGVDFLHE (64 aa). A helical membrane pass occupies residues 230–250; the sequence is ILEELLAPPTLGAIIGFIFGA. Residues 251–273 are Lumenal-facing; that stretch reads VRWLRNLIIGDDAPLRIVQSTAK. Residues 274–294 form a helical membrane-spanning segment; that stretch reads LLGDGTIPCMTIILGGNLIQG. Topologically, residues 295–312 are cytoplasmic; the sequence is LRSSAVKPMVVLGIVCVR. Residues 313 to 333 traverse the membrane as a helical segment; the sequence is YIAMPIIGIGIVLTAANLGFL. Topologically, residues 334–337 are lumenal; sequence PADP. A helical transmembrane segment spans residues 338-358; sequence LFQYVLMLQFTLPPAMNIGTM. Topologically, residues 359–370 are cytoplasmic; it reads TQLYNVAQDECS. The chain crosses the membrane as a helical span at residues 371-391; sequence VLMLWTYLVAILALTVWSTIF. The Lumenal segment spans residues 392–396; that stretch reads LHLLV.

This sequence belongs to the auxin efflux carrier (TC 2.A.69.2) family. As to expression, expressed in seedlings, cauline leaves and flowers.

The protein localises to the endoplasmic reticulum membrane. Functionally, involved in cellular auxin homeostasis by regulating auxin metabolism. Regulates intracellular auxin accumulation at the endoplasmic reticulum and thus auxin availability for nuclear auxin signaling. In Arabidopsis thaliana (Mouse-ear cress), this protein is Protein PIN-LIKES 5.